A 225-amino-acid chain; its full sequence is F-box protein SKIP27 (225 aa).

The F-box domain maps to Lys-121–Thr-169.

Part of a SCF (ASK-cullin-F-box) protein ligase complex. Interacts with SKP1A/ASK1 and SPK1B/ASK2.

The protein localises to the nucleus. It functions in the pathway protein modification; protein ubiquitination. Functionally, component of SCF(ASK-cullin-F-box) E3 ubiquitin ligase complexes, which may mediate the ubiquitination and subsequent proteasomal degradation of target proteins. The polypeptide is F-box protein SKIP27 (SKIP27) (Arabidopsis thaliana (Mouse-ear cress)).